Consider the following 93-residue polypeptide: Small ribosomal subunit protein bS18 (93 aa).

This sequence belongs to the bacterial ribosomal protein bS18 family. In terms of assembly, part of the 30S ribosomal subunit. Forms a tight heterodimer with protein bS6.

Its function is as follows. Binds as a heterodimer with protein bS6 to the central domain of the 16S rRNA, where it helps stabilize the platform of the 30S subunit. In Verminephrobacter eiseniae (strain EF01-2), this protein is Small ribosomal subunit protein bS18.